The primary structure comprises 244 residues: Phosphoadenosine 5'-phosphosulfate reductase (244 aa).

Cysteine 239 functions as the Nucleophile; cysteine thiosulfonate intermediate in the catalytic mechanism.

The protein belongs to the PAPS reductase family. CysH subfamily.

Its subcellular location is the cytoplasm. It catalyses the reaction [thioredoxin]-disulfide + sulfite + adenosine 3',5'-bisphosphate + 2 H(+) = [thioredoxin]-dithiol + 3'-phosphoadenylyl sulfate. Its pathway is sulfur metabolism; hydrogen sulfide biosynthesis; sulfite from sulfate: step 3/3. Functionally, catalyzes the formation of sulfite from phosphoadenosine 5'-phosphosulfate (PAPS) using thioredoxin as an electron donor. This chain is Phosphoadenosine 5'-phosphosulfate reductase, found in Salmonella newport (strain SL254).